A 236-amino-acid chain; its full sequence is MKKKYWNIKLEDMLEARVHLGHSTQNWNPKMAPYISAKRKGIHIINLTRTARFLSEACDLVFYAASKGKKFLIVGTNNAADEAVARASKRARCHYVNKKWLGGMLTNWSTTETRLQKFRDLRMEQKKGGLNNLPKKEATMLKRKLARLQKYLGGIQYMTGLPDIVIIIDQHKEYTALQECRTLGIPTISLIDTNCDPNLSDIAIPANDDAMASIRFILNKLVFAICQGYFSQLRKP.

It belongs to the universal ribosomal protein uS2 family.

It is found in the plastid. This chain is Small ribosomal subunit protein uS2c (rps2), found in Cuscuta obtusiflora (Peruvian dodder).